We begin with the raw amino-acid sequence, 236 residues long: 2-C-methyl-D-erythritol 4-phosphate cytidylyltransferase (236 aa).

Belongs to the IspD/TarI cytidylyltransferase family. IspD subfamily. In terms of assembly, homodimer.

It catalyses the reaction 2-C-methyl-D-erythritol 4-phosphate + CTP + H(+) = 4-CDP-2-C-methyl-D-erythritol + diphosphate. It participates in isoprenoid biosynthesis; isopentenyl diphosphate biosynthesis via DXP pathway; isopentenyl diphosphate from 1-deoxy-D-xylulose 5-phosphate: step 2/6. Its function is as follows. Catalyzes the formation of 4-diphosphocytidyl-2-C-methyl-D-erythritol from CTP and 2-C-methyl-D-erythritol 4-phosphate (MEP). The sequence is that of 2-C-methyl-D-erythritol 4-phosphate cytidylyltransferase from Escherichia fergusonii (strain ATCC 35469 / DSM 13698 / CCUG 18766 / IAM 14443 / JCM 21226 / LMG 7866 / NBRC 102419 / NCTC 12128 / CDC 0568-73).